The chain runs to 377 residues: 5-hydroxytryptamine receptor 1D (377 aa).

3 N-linked (GlcNAc...) asparagine glycosylation sites follow: N5, N17, and N21. A run of 3 helical transmembrane segments spans residues 39-64 (ISLA…TTIL), 76-97 (LIGS…ISIA), and 110-134 (LCDI…VIAL). The cysteines at positions 111 and 188 are disulfide-linked. Positions 118 and 122 each coordinate serotonin. The DRY motif; important for ligand-induced conformation changes motif lies at 135–137 (DRY). Helical transmembrane passes span 155–176 (AAAM…PLFW), 195–218 (ISYT…VLYG), 301–326 (KTLG…VLPI), and 336–359 (GLFD…YTVF). S321 contacts serotonin. Residues 352 to 356 (NPIIY) carry the NPxxY motif; important for ligand-induced conformation changes and signaling motif.

This sequence belongs to the G-protein coupled receptor 1 family. As to quaternary structure, homodimer. Heterodimer with HTR1B.

The protein localises to the cell membrane. Functionally, G-protein coupled receptor for 5-hydroxytryptamine (serotonin). Also functions as a receptor for ergot alkaloid derivatives, various anxiolytic and antidepressant drugs and other psychoactive substances. Ligand binding causes a conformation change that triggers signaling via guanine nucleotide-binding proteins (G proteins) and modulates the activity of downstream effectors, such as adenylate cyclase. HTR1D is coupled to G(i)/G(o) G alpha proteins and mediates inhibitory neurotransmission by inhibiting adenylate cyclase activity. Regulates the release of 5-hydroxytryptamine in the brain, and thereby affects neural activity. May also play a role in regulating the release of other neurotransmitters. May play a role in vasoconstriction. The sequence is that of 5-hydroxytryptamine receptor 1D (HTR1D) from Oryctolagus cuniculus (Rabbit).